The sequence spans 521 residues: Methionine--tRNA ligase (521 aa).

Positions 14 to 24 (YYSSGNPHIGH) match the 'HIGH' region motif. Residues cysteine 129, cysteine 132, cysteine 151, and histidine 155 each contribute to the Zn(2+) site. A 'KMSKS' region motif is present at residues 306 to 310 (KMSKS). Lysine 309 lines the ATP pocket.

It belongs to the class-I aminoacyl-tRNA synthetase family. MetG type 2A subfamily. Monomer. Requires Zn(2+) as cofactor.

Its subcellular location is the cytoplasm. The catalysed reaction is tRNA(Met) + L-methionine + ATP = L-methionyl-tRNA(Met) + AMP + diphosphate. Functionally, is required not only for elongation of protein synthesis but also for the initiation of all mRNA translation through initiator tRNA(fMet) aminoacylation. This is Methionine--tRNA ligase from Ureaplasma parvum serovar 3 (strain ATCC 700970).